The sequence spans 836 residues: Ethylene receptor 3 (836 aa).

3 consecutive transmembrane segments (helical) span residues 137–157 (LIAA…AGLR), 166–186 (LVQF…TAFT), and 204–224 (LTAL…PQLL). Cys-176 and His-180 together coordinate Cu cation. The 145-residue stretch at 269-413 (DRHTVLYTTL…VVAGQVAVAL (145 aa)) folds into the GAF domain. A coiled-coil region spans residues 416-452 (ATLLEESRAMRDRLAEQNRELLQARRDALMANEARQA). The Histidine kinase domain occupies 457–691 (MSQGMRRPIH…LVLRFQLQSP (235 aa)). One can recognise a Response regulatory domain in the interval 718-834 (LLIDDDDDIN…LKDELARILQ (117 aa)).

Belongs to the ethylene receptor family. Cu cation is required as a cofactor.

It localises to the endoplasmic reticulum membrane. It catalyses the reaction ATP + protein L-histidine = ADP + protein N-phospho-L-histidine.. Functionally, ethylene receptor related to bacterial two-component regulators. Acts as a negative regulator of ethylene signaling. May delay the transition from the vegetative stage to the floral stage by up-regulating GI (GIGANTEA) and RCN1 and cause starch accumulation in stems by down-regulating the alpha-amylase AMY3D. In Oryza sativa subsp. indica (Rice), this protein is Ethylene receptor 3.